A 220-amino-acid polypeptide reads, in one-letter code: ATP-dependent Clp protease proteolytic subunit 1 (220 aa).

Serine 118 (nucleophile) is an active-site residue. The active site involves histidine 143.

It belongs to the peptidase S14 family. As to quaternary structure, fourteen ClpP subunits assemble into 2 heptameric rings which stack back to back to give a disk-like structure with a central cavity, resembling the structure of eukaryotic proteasomes.

The protein resides in the cytoplasm. It catalyses the reaction Hydrolysis of proteins to small peptides in the presence of ATP and magnesium. alpha-casein is the usual test substrate. In the absence of ATP, only oligopeptides shorter than five residues are hydrolyzed (such as succinyl-Leu-Tyr-|-NHMec, and Leu-Tyr-Leu-|-Tyr-Trp, in which cleavage of the -Tyr-|-Leu- and -Tyr-|-Trp bonds also occurs).. Functionally, cleaves peptides in various proteins in a process that requires ATP hydrolysis. Has a chymotrypsin-like activity. Plays a major role in the degradation of misfolded proteins. In Rhodococcus jostii (strain RHA1), this protein is ATP-dependent Clp protease proteolytic subunit 1.